A 458-amino-acid polypeptide reads, in one-letter code: MYGKIRTIHFVGIGGIGMSGIAEVLLNLGYRVSGSDLRVSEITQRLCDLGGMIAYGHAAENLGDADVVVTSTAVKSDNPEVIEAHRRLIPVIPRAEMLAELMRMKYGIAVAGTHGKTTTTSMVSTVLSKSGIDPTVVIGGRLDSIGSNAKLGQGKFLVAEADESDGSFLKLSPIIAVVTNVDADHLDYYSDLDEIKRTFVDFINKIPFYGVAILCLDDPNVQALIPQVGKRFVTYGMSTQADYNAQEISYQEERTTFTVCWQGERLGQLSIRMPGQHNVLNALAAVAVARELEIPFEQIAEAFCDFCGVQRRFQPKYQGRDIMVVDDYGHHPAEIKVTLAAACSGWNRRVVAVFQPHRYSRTQALFDEFVTAFYQADHLVVMDIYAAGETPIPGVEARLLAEGIAGHGHRDVHYCPDAEAVAAHLREVVQAGDLVLTLGAGNVWQIGEALAEWLQQRD.

Position 112–118 (112–118 (GTHGKTT)) interacts with ATP.

Belongs to the MurCDEF family.

Its subcellular location is the cytoplasm. The catalysed reaction is UDP-N-acetyl-alpha-D-muramate + L-alanine + ATP = UDP-N-acetyl-alpha-D-muramoyl-L-alanine + ADP + phosphate + H(+). Its pathway is cell wall biogenesis; peptidoglycan biosynthesis. Its function is as follows. Cell wall formation. The polypeptide is UDP-N-acetylmuramate--L-alanine ligase (Syntrophotalea carbinolica (strain DSM 2380 / NBRC 103641 / GraBd1) (Pelobacter carbinolicus)).